A 265-amino-acid chain; its full sequence is Phosphate import ATP-binding protein PstB (265 aa).

An ABC transporter domain is found at 18–260 (MECRDCHVYY…PEDPRTESYI (243 aa)). 50-57 (GPSGCGKS) serves as a coordination point for ATP.

It belongs to the ABC transporter superfamily. Phosphate importer (TC 3.A.1.7) family. The complex is composed of two ATP-binding proteins (PstB), two transmembrane proteins (PstC and PstA) and a solute-binding protein (PstS).

Its subcellular location is the cell inner membrane. It catalyses the reaction phosphate(out) + ATP + H2O = ADP + 2 phosphate(in) + H(+). Part of the ABC transporter complex PstSACB involved in phosphate import. Responsible for energy coupling to the transport system. This chain is Phosphate import ATP-binding protein PstB, found in Ruegeria pomeroyi (strain ATCC 700808 / DSM 15171 / DSS-3) (Silicibacter pomeroyi).